Reading from the N-terminus, the 597-residue chain is Sulfite reductase [NADPH] flavoprotein alpha-component (597 aa).

Positions 62-200 constitute a Flavodoxin-like domain; it reads VTVLSASQTG…TADKWIQDVV (139 aa). FMN-binding positions include 68-73, 115-118, and 151-160; these read SQTGNA, STQG, and LGDTSYPNFC. An FAD-binding FR-type domain is found at 232-446; that stretch reads ENPYTAKLIT…VEPNDNFRLP (215 aa). FAD-binding positions include T320, N354, 384–387, 402–404, and 417–420; these read RLYS, SVG, and GVAS. Residues 517 to 518, 523 to 527, and D559 each bind NADP(+); these read SR and KIYVQ. An FAD-binding site is contributed by Y597.

Belongs to the NADPH-dependent sulphite reductase flavoprotein subunit CysJ family. The protein in the N-terminal section; belongs to the flavodoxin family. It in the C-terminal section; belongs to the flavoprotein pyridine nucleotide cytochrome reductase family. In terms of assembly, alpha(8)-beta(8). The alpha component is a flavoprotein, the beta component is a hemoprotein. The cofactor is FAD. FMN is required as a cofactor.

The catalysed reaction is hydrogen sulfide + 3 NADP(+) + 3 H2O = sulfite + 3 NADPH + 4 H(+). It participates in sulfur metabolism; hydrogen sulfide biosynthesis; hydrogen sulfide from sulfite (NADPH route): step 1/1. Component of the sulfite reductase complex that catalyzes the 6-electron reduction of sulfite to sulfide. This is one of several activities required for the biosynthesis of L-cysteine from sulfate. The flavoprotein component catalyzes the electron flow from NADPH -&gt; FAD -&gt; FMN to the hemoprotein component. The sequence is that of Sulfite reductase [NADPH] flavoprotein alpha-component from Mannheimia succiniciproducens (strain KCTC 0769BP / MBEL55E).